We begin with the raw amino-acid sequence, 490 residues long: Inosine-5'-monophosphate dehydrogenase (490 aa).

CBS domains are found at residues Met96–Val154 and Met158–Glu218. NAD(+)-binding positions include Asp252 and Gly302–Gly304. 2 residues coordinate K(+): Gly304 and Gly306. IMP is bound at residue Ser307. Cys309 contributes to the K(+) binding site. Residue Cys309 is the Thioimidate intermediate of the active site. Residues Asp342 to Gly344, Gly365 to Asn366, and Tyr389 to Gly393 contribute to the IMP site. Catalysis depends on Arg406, which acts as the Proton acceptor. Residue Glu418 coordinates IMP. Residues Glu472, Ser473, and His474 each coordinate K(+).

The protein belongs to the IMPDH/GMPR family. In terms of assembly, homotetramer. The cofactor is K(+).

It carries out the reaction IMP + NAD(+) + H2O = XMP + NADH + H(+). It functions in the pathway purine metabolism; XMP biosynthesis via de novo pathway; XMP from IMP: step 1/1. With respect to regulation, mycophenolic acid (MPA) is a non-competitive inhibitor that prevents formation of the closed enzyme conformation by binding to the same site as the amobile flap. In contrast, mizoribine monophosphate (MZP) is a competitive inhibitor that induces the closed conformation. MPA is a potent inhibitor of mammalian IMPDHs but a poor inhibitor of the bacterial enzymes. MZP is a more potent inhibitor of bacterial IMPDH. Functionally, catalyzes the conversion of inosine 5'-phosphate (IMP) to xanthosine 5'-phosphate (XMP), the first committed and rate-limiting step in the de novo synthesis of guanine nucleotides, and therefore plays an important role in the regulation of cell growth. The protein is Inosine-5'-monophosphate dehydrogenase of Aquifex aeolicus (strain VF5).